The primary structure comprises 413 residues: PCI domain-containing protein 2 homolog (413 aa).

A PCI domain is found at Val-222–Ala-403.

It belongs to the CSN12 family.

The sequence is that of PCI domain-containing protein 2 homolog from Caenorhabditis elegans.